Here is a 515-residue protein sequence, read N- to C-terminus: Peroxisomal catalase A (515 aa).

Position 2 is an N-acetylserine (Ser2). Catalysis depends on residues His70 and Asn143. Residue Tyr355 participates in heme binding. Positions 513-515 (SKF) match the Microbody targeting signal motif.

It belongs to the catalase family. Homotetramer. Requires heme as cofactor.

Its subcellular location is the peroxisome matrix. It catalyses the reaction 2 H2O2 = O2 + 2 H2O. Its function is as follows. Catalyzes the degradation of hydrogen peroxide (H(2)O(2)) generated by peroxisomal oxidases to water and oxygen, thereby protecting cells from the toxic effects of hydrogen peroxide. The chain is Peroxisomal catalase A (CTA1) from Saccharomyces cerevisiae (strain ATCC 204508 / S288c) (Baker's yeast).